A 509-amino-acid polypeptide reads, in one-letter code: Maturase K (509 aa).

The protein belongs to the intron maturase 2 family. MatK subfamily.

The protein resides in the plastid. It localises to the chloroplast. Functionally, usually encoded in the trnK tRNA gene intron. Probably assists in splicing its own and other chloroplast group II introns. This Nicotiana acuminata (Acuminate tobacco) protein is Maturase K.